Here is a 446-residue protein sequence, read N- to C-terminus: Nuclear envelope morphology protein 1 (446 aa).

The segment at 53-80 (VDQQYDHSSSHLKESDQNQERKNSVPKK) is disordered. Residues 56–75 (QYDHSSSHLKESDQNQERKN) are compositionally biased toward basic and acidic residues. Residues 87–103 (ILIEKIASILWALLLFL) traverse the membrane as a helical segment. A disordered region spans residues 132-168 (HTDKRNRGSNASENELPVSSSNINDSSEKTNPKNCNL). Over residues 139–156 (GSNASENELPVSSSNIND) the composition is skewed to polar residues. The 178-residue stretch at 247-424 (NTQKKKKLVI…LNLLPFLEAM (178 aa)) folds into the FCP1 homology domain.

It belongs to the Dullard family. As to quaternary structure, component of the NEM1-SPO7 complex.

It is found in the endoplasmic reticulum membrane. The protein resides in the nucleus membrane. The enzyme catalyses O-phospho-L-seryl-[protein] + H2O = L-seryl-[protein] + phosphate. It catalyses the reaction O-phospho-L-threonyl-[protein] + H2O = L-threonyl-[protein] + phosphate. Catalytic component of the NEM1-SPO7 complex which acts as a phosphatase and dephosphorylates the phosphatidic acid phosphohydrolase PAH1. Essential for the formation of a spherical nucleus and meiotic division. The NEM1-SPOo7 protein phosphatase is required for efficient mitophagy under prolonged respiration, as well as for reticulophagy and pexophagy. The polypeptide is Nuclear envelope morphology protein 1 (NEM1) (Saccharomyces cerevisiae (strain ATCC 204508 / S288c) (Baker's yeast)).